We begin with the raw amino-acid sequence, 472 residues long: MNFKQAYYEEPIIKDIKSSNTFSLSEQVDESILPENLKRKDLELPEVSEYDVVRHYTRLSQMNYTVDVGIYPLGSCTMKYNPKFADRVSAIDGFRNIHPFQPENTVQGALHVMYDLQEYLKKISDMDAVSLQPMAGADGEFTGILIVKKYFEDKGEDRTEIIIPDSAHGTNPASATMGGFDVVEVPSDDKGMVDLEALRAAVSKKTAAFMITNPNTLGIFEQNIEEIAKIIHNAGALLYYDGANLNAIFGITSPGLMGFDIVHFNLHKSFATPHGGGGPGAGPVAVKSFLKDFLPVPIVDFDGNSYRLNYELKKTIGKVSSFYGSFSILLRAWSYIIRNGDDGLKNVSARAVLNSNYLKKKLEKYYDIPYYPLKKHEFVLSTENTGKRALDIGKYILDNGIHSPTVYFPLIVKEAMMIEPTETVSKADLDNYADVLIEALKLSDEELKSRPKNTAVRRIDEVKAARDLKLKW.

Lysine 268 carries the N6-(pyridoxal phosphate)lysine modification.

This sequence belongs to the GcvP family. C-terminal subunit subfamily. The glycine cleavage system is composed of four proteins: P, T, L and H. In this organism, the P 'protein' is a heterodimer of two subunits. The cofactor is pyridoxal 5'-phosphate.

It catalyses the reaction N(6)-[(R)-lipoyl]-L-lysyl-[glycine-cleavage complex H protein] + glycine + H(+) = N(6)-[(R)-S(8)-aminomethyldihydrolipoyl]-L-lysyl-[glycine-cleavage complex H protein] + CO2. In terms of biological role, the glycine cleavage system catalyzes the degradation of glycine. The P protein binds the alpha-amino group of glycine through its pyridoxal phosphate cofactor; CO(2) is released and the remaining methylamine moiety is then transferred to the lipoamide cofactor of the H protein. This chain is Probable glycine dehydrogenase (decarboxylating) subunit 2, found in Thermoplasma volcanium (strain ATCC 51530 / DSM 4299 / JCM 9571 / NBRC 15438 / GSS1).